The sequence spans 287 residues: MKVNTNIISLKTQEYLRKNNEGMTQAQERLASGKRINSSLDDAAGLAVVTRMNVKSTGLDAASKNSSMGIDLLQTADSALSSMSSILQRMRQLAVQSSNGSFSDEDRKQYTAEFGSLIKELDHVADTTNYNNIKLLDQTATNAATQVSIQASDKANDLINIDLFNAKGLSAGTITLGSGSTVAGYSALSVADADSSQEATEAIDELINNISNGRALLGAGMSRLSYNVSNVNNQSIATKASASSIEDADMAAEMSEMTKYKILTQTSISMLSQANQTPQMLTQLINS.

It belongs to the bacterial flagellin family.

The protein localises to the secreted. It is found in the bacterial flagellum. Flagellin is the subunit protein which polymerizes to form the filaments of bacterial flagella. The protein is Flagellin (flaA) of Listeria innocua serovar 6a (strain ATCC BAA-680 / CLIP 11262).